We begin with the raw amino-acid sequence, 382 residues long: Ustilagic acid biosynthesis cluster protein orf2 (382 aa).

Polar residues predominate over residues 1–20; the sequence is MLQEAKVSTHTSNPLSQSVP. The tract at residues 1 to 22 is disordered; sequence MLQEAKVSTHTSNPLSQSVPQY.

It participates in secondary metabolite biosynthesis. In terms of biological role, part of the gene cluster that mediates the biosynthesis of the glycolipid biosurfactant ustilagic acid (UA). UA is a secreted cellobiose glycolipid that is toxic for many microorganisms and confers biocontrol activity to U.maydis. UA consists of 15,16-dihydroxypalmitic or 2,15,16-trihydroxypalmitic acid, which is O-glycosidically linked to cellobiose at its terminal hydroxyl group. In addition, the cellobiose moiety is acetylated and acylated with a short-chain hydroxy fatty acid. UA biosynthesis starts with omega-hydroxylation of palmitic acid catalyzed by the cytochrome P450 monooxygenase cyp1. Terminal hydroxylation of palmitic acid precedes subterminal hydroxylation catalyzed by the cytochrome P450 monooxygenase cyp2. Sequential glucosylation of the hydroxy fatty acid is probably catalyzed by the glycosyltransferase ugt1. The cellobiose lipid is further decorated by acetylation of the proximal glucose residue and by acylation with a short-chain beta-hydroxy fatty acid at the distal glucose residue. The acyltransferase uat1 may be a good candidate for catalyzing either acetylation or acylation of the cellobiose lipid. The fatty acid synthase fas2 may be involved in synthesis of the carbon backbone of the short-chain beta-hydroxy fatty acid esterified to the cellobiose disaccharide. The secreted UA consists of a mixture of both alpha-hydroxylated and non-hydroxylated glycolipids; therefore, alpha-hydroxylation of the long-chain fatty, catalyzed by the fatty acid hydroxylase ahd1, occurs late in UA biosynthesis and may be the last step before secretion. This is Ustilagic acid biosynthesis cluster protein orf2 from Mycosarcoma maydis (Corn smut fungus).